The primary structure comprises 134 residues: DNA-binding protein H-NS, plasmid (134 aa).

Residues 23 to 67 (LEILEELLEKLSVVVEERRQEESSKEAELKARLEKIESLRQLMLE) adopt a coiled-coil conformation. Positions 77–96 (SSFSAKSGAPKKVREPRPAK) are disordered. Residues 112-117 (QGRTPK) mediate DNA binding.

The protein belongs to the histone-like protein H-NS family. In terms of assembly, homodimer that oligomerizes on DNA into higher-order complexes that form bridges between disparate regions of DNA compacting it. Interacts with Hha, YdgT and StpA.

The protein localises to the cytoplasm. The protein resides in the nucleoid. In terms of biological role, a DNA-binding protein implicated in transcriptional repression and chromosome organization and compaction. Binds DNA, modifying gene expression, especially non-core genes. Does not regulate the same set of genes as its chromosomal counterpart (tested in S.typhimurium strain SL1344 / SV5015, chromosomal H-NS protein is AC A0A0H3NBY9). Thus it has a not-completely overlapping set of gene targets compared to its chromosomal homolog; many of these target genes are either plasmid-encoded or acquired by horizontally transferred genes (HTG). This protein can function in the absence of H-NS-modulating protein Hha (either chromosomal or plasmid-encoded), although many HTG genes are regulated by an H-NS/Hha complex. Binds nucleation sites in AT-rich DNA and bridges them, forming higher-order nucleoprotein complexes and condensing the chromosome. A subset of genes are repressed by H-NS in association with Hha and/or Cnu (ydgT). The protein is DNA-binding protein H-NS, plasmid (hns) of Salmonella typhi.